Reading from the N-terminus, the 455-residue chain is Bifunctional protein GlmU (455 aa).

Residues Met1–Lys225 form a pyrophosphorylase region. UDP-N-acetyl-alpha-D-glucosamine is bound by residues Leu6–Gly9, Lys20, Gln71, Gly76–Thr77, Tyr98–Asp100, Gly135, Glu150, Asn165, and Asn223. Asp100 contributes to the Mg(2+) binding site. Asn223 serves as a coordination point for Mg(2+). The tract at residues Ala226–Asp246 is linker. Residues Gly247 to Glu455 are N-acetyltransferase. Arg329 and Lys347 together coordinate UDP-N-acetyl-alpha-D-glucosamine. The Proton acceptor role is filled by His359. Residues Tyr362 and Asn373 each contribute to the UDP-N-acetyl-alpha-D-glucosamine site. Residues Ala376, Asn382 to Tyr383, Ser401, Ala419, and Arg436 contribute to the acetyl-CoA site.

The protein in the N-terminal section; belongs to the N-acetylglucosamine-1-phosphate uridyltransferase family. It in the C-terminal section; belongs to the transferase hexapeptide repeat family. Homotrimer. Requires Mg(2+) as cofactor.

The protein resides in the cytoplasm. It catalyses the reaction alpha-D-glucosamine 1-phosphate + acetyl-CoA = N-acetyl-alpha-D-glucosamine 1-phosphate + CoA + H(+). It carries out the reaction N-acetyl-alpha-D-glucosamine 1-phosphate + UTP + H(+) = UDP-N-acetyl-alpha-D-glucosamine + diphosphate. It participates in nucleotide-sugar biosynthesis; UDP-N-acetyl-alpha-D-glucosamine biosynthesis; N-acetyl-alpha-D-glucosamine 1-phosphate from alpha-D-glucosamine 6-phosphate (route II): step 2/2. The protein operates within nucleotide-sugar biosynthesis; UDP-N-acetyl-alpha-D-glucosamine biosynthesis; UDP-N-acetyl-alpha-D-glucosamine from N-acetyl-alpha-D-glucosamine 1-phosphate: step 1/1. It functions in the pathway bacterial outer membrane biogenesis; LPS lipid A biosynthesis. Catalyzes the last two sequential reactions in the de novo biosynthetic pathway for UDP-N-acetylglucosamine (UDP-GlcNAc). The C-terminal domain catalyzes the transfer of acetyl group from acetyl coenzyme A to glucosamine-1-phosphate (GlcN-1-P) to produce N-acetylglucosamine-1-phosphate (GlcNAc-1-P), which is converted into UDP-GlcNAc by the transfer of uridine 5-monophosphate (from uridine 5-triphosphate), a reaction catalyzed by the N-terminal domain. The chain is Bifunctional protein GlmU from Aromatoleum aromaticum (strain DSM 19018 / LMG 30748 / EbN1) (Azoarcus sp. (strain EbN1)).